Consider the following 542-residue polypeptide: MLSSVLFPAMRTLLLLKYVFSLISLSAICCQTVSAIPVVSREGLPMTLSDKCAEALISDVACDPNVLDFKPGYYYSPEILQRACTDTCKSALDSYLDRVKSSCGTETIVGPFDLEVSALIVPGMRKDLFQKTCLQDNGRYCNNVAATAAVIADPGVSRFNYLSSVPPGTVPPDPCDIQHVCLYVDDQSMRNIWATIDYYSYWVLYIINAGCYNMHRLNGTELCISAPGQKFVPGDATDLPGATVTTPVPAPSDAASGSNRYCGRWYGVKKGDYCNLIVLKFGITMDNFIFLNPALNSNCTNLYAEESYCVLPVGDINTYSGKPGYVSTPTGSETTATGIRFEDLPDATENPYPRPPPGPPIAEGTRDDCNYYFDGAEFQYNVTNTYWNSNCQIPPPQVYRVDPESFESWNAGLGNISRPECSFKPGFRYCGRYYALSDDSDEPTPTTPITTSDDPTSTSATPTTPTTSSKPSPGAPTMTGQPSACNKWHTVTNGESCTVIPKTFGITLEQFLAWNPTVKSDCTENFWAGYAYCVGVKTLGPS.

The N-terminal stretch at 1–35 is a signal peptide; the sequence is MLSSVLFPAMRTLLLLKYVFSLISLSAICCQTVSA. N-linked (GlcNAc...) asparagine glycosylation is found at Asn-218, Asn-298, Asn-381, and Asn-415. The region spanning 264 to 310 is the LysM 1 domain; sequence RWYGVKKGDYCNLIVLKFGITMDNFIFLNPALNSNCTNLYAEESYCV. The disordered stretch occupies residues 439–484; it reads DSDEPTPTTPITTSDDPTSTSATPTTPTTSSKPSPGAPTMTGQPSA. Residues 443-472 show a composition bias toward low complexity; sequence PTPTTPITTSDDPTSTSATPTTPTTSSKPS. In terms of domain architecture, LysM 2 spans 487–534; the sequence is KWHTVTNGESCTVIPKTFGITLEQFLAWNPTVKSDCTENFWAGYAYCV.

It localises to the secreted. Its function is as follows. Might have a role in sequestration of chitin oligosaccharides (breakdown products of fungal cell walls that are released during invasion and act as triggers of host immunity) to dampen host defense. This chain is LysM domain-containing protein ARB_00327, found in Arthroderma benhamiae (strain ATCC MYA-4681 / CBS 112371) (Trichophyton mentagrophytes).